The following is a 736-amino-acid chain: Poly(A) polymerase gamma (736 aa).

The residue at position 2 (K2) is an N6-acetyllysine. Residues S23 and S29 each carry the phosphoserine modification. ATP contacts are provided by residues 99–101 (FGS), T108, 112–114 (DID), D166, K227, Y236, and 245–246 (GV). Residues D112, D114, and D166 each coordinate Mg(2+). The disordered stretch occupies residues 506–564 (KQSLSDVNRSSGGLQSKRLSLDSSCLDSSRDTDNGTPFNSPASKSDSPSVGETERNSAE). Residues 509-519 (LSDVNRSSGGL) show a composition bias toward polar residues. The segment covering 521–532 (SKRLSLDSSCLD) has biased composition (low complexity). S525 carries the post-translational modification Phosphoserine. The segment covering 539–555 (NGTPFNSPASKSDSPSV) has biased composition (polar residues). Phosphoserine is present on residues S599 and S648. Phosphothreonine is present on T654. The span at 673 to 685 (DPRTAEERKRKSV) shows a compositional bias: basic and acidic residues. Positions 673–720 (DPRTAEERKRKSVDAIGGESMPIPTIDTSRKKRLPSKELPDSSSPVPA) are disordered. 2 positions are modified to phosphoserine: S684 and S708.

This sequence belongs to the poly(A) polymerase family. Mg(2+) is required as a cofactor. The cofactor is Mn(2+). As to expression, expressed predominantly in testis, and weakly in other tissues. Overexpressed in several tumors.

It localises to the nucleus. It catalyses the reaction RNA(n) + ATP = RNA(n)-3'-adenine ribonucleotide + diphosphate. In terms of biological role, responsible for the post-transcriptional adenylation of the 3'-terminal of mRNA precursors and several small RNAs including signal recognition particle (SRP) RNA, nuclear 7SK RNA, U2 small nuclear RNA, and ribosomal 5S RNA. This is Poly(A) polymerase gamma from Homo sapiens (Human).